The following is a 371-amino-acid chain: S-adenosylmethionine:tRNA ribosyltransferase-isomerase (371 aa).

This sequence belongs to the QueA family. Monomer.

Its subcellular location is the cytoplasm. The enzyme catalyses 7-aminomethyl-7-carbaguanosine(34) in tRNA + S-adenosyl-L-methionine = epoxyqueuosine(34) in tRNA + adenine + L-methionine + 2 H(+). It participates in tRNA modification; tRNA-queuosine biosynthesis. Functionally, transfers and isomerizes the ribose moiety from AdoMet to the 7-aminomethyl group of 7-deazaguanine (preQ1-tRNA) to give epoxyqueuosine (oQ-tRNA). The chain is S-adenosylmethionine:tRNA ribosyltransferase-isomerase from Rickettsia akari (strain Hartford).